The chain runs to 408 residues: D-galactonate dehydratase family member OG2516_05608 (408 aa).

Mg(2+) is bound at residue Asp-215. Position 217 (His-217) interacts with D-arabinonate. Residues Glu-241 and Glu-267 each coordinate Mg(2+). D-arabinonate contacts are provided by Glu-267, Arg-288, His-317, and Glu-344.

Belongs to the mandelate racemase/muconate lactonizing enzyme family. GalD subfamily.

Its function is as follows. Has no detectable activity with D-mannonate and with a panel of 70 other acid sugars (in vitro), in spite of the conservation of the residues that are expected to be important for catalytic activity and cofactor binding. May have evolved a divergent function. The chain is D-galactonate dehydratase family member OG2516_05608 from Oceanicola granulosus (strain ATCC BAA-861 / DSM 15982 / KCTC 12143 / HTCC2516).